Here is a 343-residue protein sequence, read N- to C-terminus: Endoglucanase C (343 aa).

The Proton donor role is filled by E140. E280 (nucleophile) is an active-site residue.

The protein belongs to the glycosyl hydrolase 5 (cellulase A) family.

The catalysed reaction is Endohydrolysis of (1-&gt;4)-beta-D-glucosidic linkages in cellulose, lichenin and cereal beta-D-glucans.. The protein operates within glycan metabolism; cellulose degradation. Its function is as follows. This enzyme catalyzes the endohydrolysis of 1,4-beta-glucosidic linkages in cellulose, lichenin and cereal beta-D-glucans. The polypeptide is Endoglucanase C (celC) (Acetivibrio thermocellus (Hungateiclostridium thermocellum)).